A 237-amino-acid polypeptide reads, in one-letter code: Insulin-like growth factor-binding protein 4 (237 aa).

The IGFBP N-terminal domain occupies 2-82; that stretch reads EAIHCPPCSE…VHGQGVCMEL (81 aa). Cystine bridges form between cysteine 6/cysteine 32, cysteine 9/cysteine 34, cysteine 17/cysteine 35, cysteine 23/cysteine 38, cysteine 46/cysteine 59, and cysteine 53/cysteine 79. Asparagine 104 carries an N-linked (GlcNAc...) asparagine glycan. Disulfide bonds link cysteine 110–cysteine 117, cysteine 153–cysteine 183, cysteine 194–cysteine 205, and cysteine 207–cysteine 228. The region spanning 150-228 is the Thyroglobulin type-1 domain; the sequence is QGSCQSELHR…GLEPKGELDC (79 aa). Residue serine 234 is modified to Phosphoserine.

As to quaternary structure, binds IGF2 more than IGF1. In terms of processing, there are two different molecular mass variants (29 kDa and 24 kDa forms). The 29 kDa form was shown to be N-glycosylated. In terms of tissue distribution, detected in adult ewe, liver &gt; kidney &gt; lung &gt;&gt; heart and also in several fetal tissues.

It localises to the secreted. IGF-binding proteins prolong the half-life of the IGFs and have been shown to either inhibit or stimulate the growth promoting effects of the IGFs on cell culture. They alter the interaction of IGFs with their cell surface receptors. This is Insulin-like growth factor-binding protein 4 (IGFBP4) from Ovis aries (Sheep).